Consider the following 282-residue polypeptide: Pantothenate synthetase (282 aa).

Position 30-37 (30-37 (MGYLHEGH)) interacts with ATP. The active-site Proton donor is His37. Gln61 serves as a coordination point for (R)-pantoate. Position 61 (Gln61) interacts with beta-alanine. ATP is bound at residue 147 to 150 (GMKD). Gln153 serves as a coordination point for (R)-pantoate. ATP-binding positions include Val176 and 184 to 187 (KSSR).

This sequence belongs to the pantothenate synthetase family. As to quaternary structure, homodimer.

It localises to the cytoplasm. The enzyme catalyses (R)-pantoate + beta-alanine + ATP = (R)-pantothenate + AMP + diphosphate + H(+). It functions in the pathway cofactor biosynthesis; (R)-pantothenate biosynthesis; (R)-pantothenate from (R)-pantoate and beta-alanine: step 1/1. In terms of biological role, catalyzes the condensation of pantoate with beta-alanine in an ATP-dependent reaction via a pantoyl-adenylate intermediate. The sequence is that of Pantothenate synthetase from Bacillus cereus (strain B4264).